The primary structure comprises 923 residues: Probable dipeptidyl-aminopeptidase B (923 aa).

Basic and acidic residues predominate over residues 1–16 (MATEKGHGRDDEERVP). Residues 1–21 (MATEKGHGRDDEERVPLTRGS) are disordered. Topologically, residues 1–99 (MATEKGHGRD…KPMHKSVKIA (99 aa)) are cytoplasmic. Residues 100–120 (LWTLLFLSLGGWSLAFVLFIF) traverse the membrane as a helical; Signal-anchor for type II membrane protein segment. Residues 121–923 (RSHDTYETPI…GLSYNFKHLH (803 aa)) lie on the Vacuolar side of the membrane. N135, N351, and N574 each carry an N-linked (GlcNAc...) asparagine glycan. Catalysis depends on S756, which acts as the Charge relay system. Residue N815 is glycosylated (N-linked (GlcNAc...) asparagine). Catalysis depends on charge relay system residues D833 and H866. N-linked (GlcNAc...) asparagine glycosylation is present at N902.

This sequence belongs to the peptidase S9B family.

The protein resides in the vacuole membrane. The catalysed reaction is Release of an N-terminal dipeptide, Xaa-Yaa-|-Zaa-, from a polypeptide, preferentially when Yaa is Pro, provided Zaa is neither Pro nor hydroxyproline.. In terms of biological role, type IV dipeptidyl-peptidase which removes N-terminal dipeptides sequentially from polypeptides having unsubstituted N-termini provided that the penultimate residue is proline. This chain is Probable dipeptidyl-aminopeptidase B (DAPB), found in Ajellomyces capsulatus (strain G186AR / H82 / ATCC MYA-2454 / RMSCC 2432) (Darling's disease fungus).